The chain runs to 75 residues: OcyC3 (75 aa).

An N-terminal signal peptide occupies residues 1–22 (MQYKTFLVISLAYLLVADEAAA). Positions 51-75 (EINNVFEPYHENLDLELERFLSQLQ) are excised as a propeptide.

In terms of tissue distribution, expressed by the venom gland.

It is found in the secreted. The protein localises to the target cell membrane. Amphipathic peptide with probable antimicrobial activity. May act by disrupting the integrity of the bacterial cell membrane. This Opisthacanthus cayaporum (South American scorpion) protein is OcyC3.